We begin with the raw amino-acid sequence, 104 residues long: Large ribosomal subunit protein uL24 (104 aa).

Belongs to the universal ribosomal protein uL24 family. As to quaternary structure, part of the 50S ribosomal subunit.

One of two assembly initiator proteins, it binds directly to the 5'-end of the 23S rRNA, where it nucleates assembly of the 50S subunit. Functionally, one of the proteins that surrounds the polypeptide exit tunnel on the outside of the subunit. The chain is Large ribosomal subunit protein uL24 from Rhodopseudomonas palustris (strain BisB5).